Reading from the N-terminus, the 231-residue chain is Cuticlin 2 (231 aa).

The N-terminal stretch at 1–16 (MQKLIVFFTTIAAAQA) is a signal peptide. A run of 12 repeats spans residues 75–78 (AAPI), 79–82 (AAPA), 90–93 (AAPV), 105–108 (AAPI), 114–117 (AAPA), 121–124 (AAPV), 137–140 (AAPA), 153–156 (AAPA), 169–172 (AAPA), 192–195 (AAPA), 208–211 (AAPA), and 218–221 (AAPA). The 12 X 4 AA repeats of A-A-P-[AVI] stretch occupies residues 75–221 (AAPIAAPAGG…AGGYQAAAPA (147 aa)).

Tyrosine residues can be cross-linked in vitro, leading to the formation of insoluble high molecular-weight complexes.

The protein localises to the secreted. Component of the insoluble part of the cuticles. This chain is Cuticlin 2, found in Caenorhabditis elegans.